The sequence spans 187 residues: Probable nicotinate-nucleotide adenylyltransferase (187 aa).

Belongs to the NadD family.

It catalyses the reaction nicotinate beta-D-ribonucleotide + ATP + H(+) = deamido-NAD(+) + diphosphate. Its pathway is cofactor biosynthesis; NAD(+) biosynthesis; deamido-NAD(+) from nicotinate D-ribonucleotide: step 1/1. Functionally, catalyzes the reversible adenylation of nicotinate mononucleotide (NaMN) to nicotinic acid adenine dinucleotide (NaAD). The chain is Probable nicotinate-nucleotide adenylyltransferase from Agrobacterium fabrum (strain C58 / ATCC 33970) (Agrobacterium tumefaciens (strain C58)).